The following is a 352-amino-acid chain: Heat-inducible transcription repressor HrcA (352 aa).

The protein belongs to the HrcA family.

Its function is as follows. Negative regulator of class I heat shock genes (grpE-dnaK-dnaJ and groELS operons). Prevents heat-shock induction of these operons. This is Heat-inducible transcription repressor HrcA from Latilactobacillus sakei (Lactobacillus sakei).